The chain runs to 134 residues: Small ribosomal subunit protein uS9c (134 aa).

The span at aspartate 105–alanine 114 shows a compositional bias: basic and acidic residues. A disordered region spans residues aspartate 105–arginine 134. Residues lysine 115 to arginine 134 are compositionally biased toward basic residues.

Belongs to the universal ribosomal protein uS9 family.

Its subcellular location is the plastid. The protein localises to the cyanelle. This chain is Small ribosomal subunit protein uS9c (rps9), found in Cyanophora paradoxa.